A 309-amino-acid chain; its full sequence is Porphobilinogen deaminase (309 aa).

C244 carries the post-translational modification S-(dipyrrolylmethanemethyl)cysteine.

Belongs to the HMBS family. In terms of assembly, monomer. It depends on dipyrromethane as a cofactor.

The catalysed reaction is 4 porphobilinogen + H2O = hydroxymethylbilane + 4 NH4(+). It participates in porphyrin-containing compound metabolism; protoporphyrin-IX biosynthesis; coproporphyrinogen-III from 5-aminolevulinate: step 2/4. In terms of biological role, tetrapolymerization of the monopyrrole PBG into the hydroxymethylbilane pre-uroporphyrinogen in several discrete steps. This is Porphobilinogen deaminase from Agrobacterium fabrum (strain C58 / ATCC 33970) (Agrobacterium tumefaciens (strain C58)).